Consider the following 145-residue polypeptide: Copper transporter 4 (145 aa).

2 helical membrane-spanning segments follow: residues 53–73 (GMYA…EWLA) and 106–126 (YLVI…AIFG).

This sequence belongs to the copper transporter (Ctr) (TC 1.A.56) family. SLC31A subfamily. As to expression, highly expressed in roots and at lower levels in leaves, stems and flowers.

The protein localises to the membrane. In terms of biological role, involved in the transport of copper. The sequence is that of Copper transporter 4 (COPT4) from Arabidopsis thaliana (Mouse-ear cress).